An 84-amino-acid chain; its full sequence is MKLTCVLVVLLLVLPFGDLITTSNTEDNKRGATPWQNSLKARGVCSTPEGSCVHNGCICQNAPCCHASGCNWANVCPGFLWDKN.

Positions M1–L19 are cleaved as a signal peptide. Residues I20–R42 constitute a propeptide that is removed on maturation. Residue W72 is modified to 6'-bromotryptophan. P77 is modified (4-hydroxyproline). At W81 the chain carries 6'-bromotryptophan.

Belongs to the conotoxin O1 superfamily. Contains 4 disulfide bonds. In terms of tissue distribution, expressed by the venom duct.

Its subcellular location is the secreted. In terms of biological role, mu-conotoxins block voltage-gated sodium channels. This toxin reversibly blocks voltage-gated sodium channel in cephalopods, with no alteration in the voltage dependence of sodium conductance or on the kinetics of inactivation. The protein is Mu-conotoxin-like Cal 12.2d of Californiconus californicus (California cone).